Reading from the N-terminus, the 367-residue chain is Probable butyrate kinase (367 aa).

This sequence belongs to the acetokinase family.

It localises to the cytoplasm. The catalysed reaction is butanoate + ATP = butanoyl phosphate + ADP. This Bacillus cereus (strain ATCC 10987 / NRS 248) protein is Probable butyrate kinase.